The sequence spans 505 residues: Deoxyguanosinetriphosphate triphosphohydrolase (505 aa).

In terms of domain architecture, HD spans 66 to 273; the sequence is RLTHSMEVQQ…MEAADDISYC (208 aa).

This sequence belongs to the dGTPase family. Type 1 subfamily. In terms of assembly, homotetramer. The cofactor is Mg(2+).

It catalyses the reaction dGTP + H2O = 2'-deoxyguanosine + triphosphate + H(+). Its function is as follows. dGTPase preferentially hydrolyzes dGTP over the other canonical NTPs. This Salmonella paratyphi A (strain AKU_12601) protein is Deoxyguanosinetriphosphate triphosphohydrolase.